A 126-amino-acid chain; its full sequence is Small ribosomal subunit protein uS11 (126 aa).

This sequence belongs to the universal ribosomal protein uS11 family. As to quaternary structure, part of the 30S ribosomal subunit.

Located on the platform of the 30S subunit. This Methanosarcina acetivorans (strain ATCC 35395 / DSM 2834 / JCM 12185 / C2A) protein is Small ribosomal subunit protein uS11.